We begin with the raw amino-acid sequence, 270 residues long: Replication protein A 32 kDa subunit (270 aa).

At Met1 the chain carries N-acetylmethionine. A phosphoserine; by PRKDC mark is found at Ser4 and Ser8. A disordered region spans residues 20 to 41; it reads YTQSPGGFGSPTPSQAEKKSRV. Residue Thr21 is modified to Phosphothreonine; by PRKDC. Ser23 bears the Phosphoserine; by CDK2 mark. Ser29 is subject to Phosphoserine; by CDK1. At Ser33 the chain carries Phosphoserine; by PRKDC. Glycyl lysine isopeptide (Lys-Gly) (interchain with G-Cter in ubiquitin) cross-links involve residues Lys37 and Lys38. A DNA-binding region (OB) is located at residues 74–148; sequence VTIVGIIRHA…KSLVAFKIIP (75 aa). The segment at 171-192 is disordered; the sequence is KPNSQASAGRPSMSNPGMSEPG. The tract at residues 187–270 is interaction with RAD52, TIPIN, UNG and XPA; sequence GMSEPGNFSG…DDHFKSTDAE (84 aa).

Belongs to the replication factor A protein 2 family. In terms of assembly, component of the replication protein A complex (RPA/RP-A), a heterotrimeric complex composed of RPA1, RPA2 and RPA3. Interacts with PRPF19; the PRP19-CDC5L complex is recruited to the sites of DNA repair where it ubiquitinates the replication protein A complex (RPA). Interacts with SERTAD3. Interacts with TIPIN. Interacts with TIMELESS. Interacts with PPP4R2; the interaction is direct, DNA damage-dependent and mediates the recruitment of the PP4 catalytic subunit PPP4C. Interacts (hyperphosphorylated) with RAD51. Interacts with SMARCAL1; the interaction is direct and mediates the recruitment to the RPA complex of SMARCAL1. Interacts with RAD52 and XPA; those interactions are direct and associate RAD52 and XPA to the RPA complex. Interacts with FBH1. Interacts with ETAA1; the interaction is direct and promotes ETAA1 recruitment at stalled replication forks. Interacts with DDI2. Interacts (in unphosphorylated form via N-terminus) with EIF4EBP3; the interaction enhances EIF4EBP3-mediated inhibition of EIF4E-mediated mRNA nuclear export. Interacts with nuclear UNG (isoform 2); this interaction mediates UNG recruitment to RPA-coated single-stranded DNA at stalled replication forks. Post-translationally, differentially phosphorylated throughout the cell cycle, becoming phosphorylated at the G1-S transition and dephosphorylated in late mitosis. Mainly phosphorylated at Ser-23 and Ser-29, by cyclin A-CDK2 and cyclin B-CDK1, respectively during DNA replication and mitosis. Dephosphorylation may require the serine/threonine-protein phosphatase 4. Phosphorylation at Ser-23 and Ser-29 is a prerequisite for further phosphorylation. Becomes hyperphosphorylated on additional residues including Ser-4, Ser-8, Thr-21 and Ser-33 in response to DNA damage. Hyperphosphorylation is mediated by ATM, ATR and PRKDC. Primarily recruited to DNA repair nuclear foci as a hypophosphorylated form it undergoes subsequent hyperphosphorylation, catalyzed by ATR. Hyperphosphorylation is required for RAD51 recruitment to chromatin and efficient DNA repair. Phosphorylation at Thr-21 depends upon RFWD3 presence. DNA damage-induced 'Lys-63'-linked polyubiquitination by PRPF19 mediates ATRIP recruitment to the RPA complex at sites of DNA damage and activation of ATR. Ubiquitinated by RFWD3 at stalled replication forks in response to DNA damage: ubiquitination by RFWD3 does not lead to degradation by the proteasome and promotes removal of the RPA complex from stalled replication forks, promoting homologous recombination.

It is found in the nucleus. It localises to the PML body. As part of the heterotrimeric replication protein A complex (RPA/RP-A), binds and stabilizes single-stranded DNA intermediates, that form during DNA replication or upon DNA stress. It prevents their reannealing and in parallel, recruits and activates different proteins and complexes involved in DNA metabolism. Thereby, it plays an essential role both in DNA replication and the cellular response to DNA damage. In the cellular response to DNA damage, the RPA complex controls DNA repair and DNA damage checkpoint activation. Through recruitment of ATRIP activates the ATR kinase a master regulator of the DNA damage response. It is required for the recruitment of the DNA double-strand break repair factors RAD51 and RAD52 to chromatin in response to DNA damage. Also recruits to sites of DNA damage proteins like XPA and XPG that are involved in nucleotide excision repair and is required for this mechanism of DNA repair. Also plays a role in base excision repair (BER) probably through interaction with UNG. Also recruits SMARCAL1/HARP, which is involved in replication fork restart, to sites of DNA damage. May also play a role in telomere maintenance. This is Replication protein A 32 kDa subunit from Mus musculus (Mouse).